The primary structure comprises 514 residues: Transmembrane protein 117 (514 aa).

Residues 1-15 (MGKDFRYYFQHPWSR) are Cytoplasmic-facing. Residues 16–36 (MIVAYLVIFFNFLIFAEDPVS) form a helical membrane-spanning segment. The Extracellular segment spans residues 37 to 65 (HSQTEANVIVVGNCFSFVTNKYPRGVGWR). Residues 66 to 86 (ILKVLLWLLAILIGLIAGKFL) traverse the membrane as a helical segment. Residues 87–110 (FHQRLFGQLLRLKMFREDHGSWMT) lie on the Cytoplasmic side of the membrane. Residues 111–131 (MFFSTILFLFIFSHIYNTILL) traverse the membrane as a helical segment. The Extracellular portion of the chain corresponds to 132 to 154 (MDGNMGAYLITDYMGIRNESFMK). A helical transmembrane segment spans residues 155–175 (LAAVGTWMGDFVTAWMVTDMM). The Cytoplasmic portion of the chain corresponds to 176-198 (LQDKPYPDWGKSARAFWKKGNVR). A helical transmembrane segment spans residues 199–219 (IILFWTVLFTLTSVVVLVITT). The Extracellular portion of the chain corresponds to 220 to 239 (DWISWDKLNRGFLPSDEVSR). The chain crosses the membrane as a helical span at residues 240–260 (AFLASFILVFDLLIVMQDWEF). Topologically, residues 261–295 (PHFMGDVDVNLPGLHTPHMQFKIPFFQKIFKEEYR) are cytoplasmic. A helical transmembrane segment spans residues 296-316 (IHITGKWFNYGIIFLVLILDL). At 317-394 (NMWKNQIFYK…FIGASLDVKC (78 aa)) the chain is on the extracellular side. N-linked (GlcNAc...) asparagine glycosylation is found at asparagine 353 and asparagine 371. Residues 395–415 (LAFVPSLIAFVWFGFFIWFFG) form a helical membrane-spanning segment. Topologically, residues 416-514 (RFLKNEQGME…PAASQRMRTN (99 aa)) are cytoplasmic. Residues 430–450 (TYTRMKRKSPSEHSKDMGITR) form a disordered region. Basic and acidic residues predominate over residues 438-448 (SPSEHSKDMGI). Position 453 is a phosphothreonine (threonine 453). The segment at 494–514 (ESTSEVEAEQEPAASQRMRTN) is disordered.

It belongs to the TMEM117 family.

It is found in the cell membrane. Involved in endoplasmic reticulum (ER) stress-induced cell death pathway. This chain is Transmembrane protein 117 (Tmem117), found in Mus musculus (Mouse).